Consider the following 547-residue polypeptide: Large cysteine-rich periplasmic protein OmcB (547 aa).

The N-terminal stretch at 1 to 22 (MNKLIRRAVTIFAVTSVASLFA) is a signal peptide. Positions 45–84 (KAKDNTSHKSKKARKNHSKETPVNRKKVAPVHESKATGPK) are disordered. Residues 52–61 (HKSKKARKNH) show a composition bias toward basic residues.

As to quaternary structure, part of a disulfide cross-linked outer membrane complex (COMC) composed of the major outer membrane porin (MOMP), the small cysteine-rich protein (OmcA) and the large cysteine-rich periplasmic protein (OmcB).

The protein resides in the periplasm. Functionally, in elementary bodies (EBs, the infectious stage, which is able to survive outside the host cell) provides the structural integrity of the outer envelope through disulfide cross-links with the small cysteine-rich protein and the major outer membrane protein. It has been described in publications as the Sarkosyl-insoluble COMC (Chlamydia outer membrane complex), and serves as the functional equivalent of peptidoglycan. The protein is Large cysteine-rich periplasmic protein OmcB (omcB) of Chlamydia trachomatis serovar L2 (strain ATCC VR-902B / DSM 19102 / 434/Bu).